Here is a 466-residue protein sequence, read N- to C-terminus: Arginine biosynthesis bifunctional protein ArgJ, mitochondrial (466 aa).

Residues T194, K223, T234, E321, N461, and T466 each coordinate substrate. T234 acts as the Nucleophile in catalysis.

It belongs to the ArgJ family. In terms of assembly, heterodimer of an alpha and a beta chain. The alpha and beta chains are autoproteolytically processed from a single precursor protein within the mitochondrion.

The protein localises to the mitochondrion matrix. It catalyses the reaction N(2)-acetyl-L-ornithine + L-glutamate = N-acetyl-L-glutamate + L-ornithine. It carries out the reaction L-glutamate + acetyl-CoA = N-acetyl-L-glutamate + CoA + H(+). It functions in the pathway amino-acid biosynthesis; L-arginine biosynthesis; L-ornithine and N-acetyl-L-glutamate from L-glutamate and N(2)-acetyl-L-ornithine (cyclic): step 1/1. The protein operates within amino-acid biosynthesis; L-arginine biosynthesis; N(2)-acetyl-L-ornithine from L-glutamate: step 1/4. Functionally, catalyzes two activities which are involved in the cyclic version of arginine biosynthesis: the synthesis of acetylglutamate from glutamate and acetyl-CoA, and of ornithine by transacetylation between acetylornithine and glutamate. This chain is Arginine biosynthesis bifunctional protein ArgJ, mitochondrial, found in Aspergillus flavus (strain ATCC 200026 / FGSC A1120 / IAM 13836 / NRRL 3357 / JCM 12722 / SRRC 167).